A 297-amino-acid chain; its full sequence is NADPH-dependent 1-acyldihydroxyacetone phosphate reductase (297 aa).

The short motif at 16–20 (GASGG) is the GXSXG element. Catalysis depends on S18, which acts as the Nucleophile; for lipase activity. The NADP(+) site is built by I21, D64, N93, R126, Y157, K161, V190, and T192. Catalysis depends on Y157, which acts as the Proton acceptor. Catalysis depends on K161, which acts as the Lowers pKa of active site Tyr.

This sequence belongs to the short-chain dehydrogenases/reductases (SDR) family.

Its subcellular location is the lipid droplet. It is found in the mitochondrion outer membrane. The protein resides in the endoplasmic reticulum. The catalysed reaction is a 1-acylglycerone 3-phosphate + NADPH + H(+) = a 1-acyl-sn-glycero-3-phosphate + NADP(+). It catalyses the reaction 1-hexadecanoyl-sn-glycero-3-phosphate + NADP(+) = 1-hexadecanoylglycerone 3-phosphate + NADPH + H(+). The enzyme catalyses a triacylglycerol + H2O = a diacylglycerol + a fatty acid + H(+). It carries out the reaction 1,2,3-tri-(9Z-octadecenoyl)-glycerol + H2O = di-(9Z)-octadecenoylglycerol + (9Z)-octadecenoate + H(+). Its activity is regulated as follows. Inhibited by divalent cations and N-ethylmaleimide. Activity is reduced under anaerobic growth conditions. Its function is as follows. Can convert acyl and alkyl dihydroxyacetone-phosphate (DHAP) into glycerolipids and ether lipids, respectively. Required for the biosynthesis of phosphatidic acid via the DHAP pathway, where it reduces 1-acyl DHAP to lysophosphatidic acid (LPA). Also has triacylglycerol (TAG) lipase activity. Involved in the mobilization of the non-polar storage lipids triacylglycerols (TAGs) from lipid particles by hydrolysis of TAGs. Required for spore germination. Plays a role in cell wall biogenesis, but this effect may be indirect by affecting the activities of cell wall synthesis enzymes. Lipolysis of TAG by AYR1 is essential for starvation-induced autophagy. Forms an NADPH-regulated cation-selective channel in the mitochondrial outer membrane. The chain is NADPH-dependent 1-acyldihydroxyacetone phosphate reductase from Saccharomyces cerevisiae (strain ATCC 204508 / S288c) (Baker's yeast).